Reading from the N-terminus, the 83-residue chain is Apolipoprotein C-I (83 aa).

A signal peptide spans 1–26 (MRLILSLPVLAVVLAMVLEGPAPAQA).

The protein belongs to the apolipoprotein C1 family.

It is found in the secreted. Inhibitor of lipoprotein binding to the low density lipoprotein (LDL) receptor, LDL receptor-related protein, and very low density lipoprotein (VLDL) receptor. Associates with high density lipoproteins (HDL) and the triacylglycerol-rich lipoproteins in the plasma and makes up about 10% of the protein of the VLDL and 2% of that of HDL. Appears to interfere directly with fatty acid uptake and is also the major plasma inhibitor of cholesteryl ester transfer protein (CETP). Binds free fatty acids and reduces their intracellular esterification. Modulates the interaction of APOE with beta-migrating VLDL and inhibits binding of beta-VLDL to the LDL receptor-related protein. This chain is Apolipoprotein C-I (APOC1), found in Eonycteris spelaea (Lesser dawn bat).